The following is a 216-amino-acid chain: Imidazole glycerol phosphate synthase subunit HisH (216 aa).

The region spanning 2-216 is the Glutamine amidotransferase type-1 domain; the sequence is SIAIIDYGSG…LISNFLRWKP (215 aa). The Nucleophile role is filled by Cys-88. Active-site residues include His-196 and Glu-198.

Heterodimer of HisH and HisF.

It localises to the cytoplasm. It carries out the reaction 5-[(5-phospho-1-deoxy-D-ribulos-1-ylimino)methylamino]-1-(5-phospho-beta-D-ribosyl)imidazole-4-carboxamide + L-glutamine = D-erythro-1-(imidazol-4-yl)glycerol 3-phosphate + 5-amino-1-(5-phospho-beta-D-ribosyl)imidazole-4-carboxamide + L-glutamate + H(+). The enzyme catalyses L-glutamine + H2O = L-glutamate + NH4(+). It functions in the pathway amino-acid biosynthesis; L-histidine biosynthesis; L-histidine from 5-phospho-alpha-D-ribose 1-diphosphate: step 5/9. In terms of biological role, IGPS catalyzes the conversion of PRFAR and glutamine to IGP, AICAR and glutamate. The HisH subunit catalyzes the hydrolysis of glutamine to glutamate and ammonia as part of the synthesis of IGP and AICAR. The resulting ammonia molecule is channeled to the active site of HisF. The protein is Imidazole glycerol phosphate synthase subunit HisH of Bradyrhizobium diazoefficiens (strain JCM 10833 / BCRC 13528 / IAM 13628 / NBRC 14792 / USDA 110).